Here is a 37-residue protein sequence, read N- to C-terminus: Non-specific lipid-transfer protein P4 (37 aa).

It belongs to the plant LTP family.

Its subcellular location is the secreted. Its function is as follows. Plant non-specific lipid-transfer proteins transfer phospholipids as well as galactolipids across membranes. May play a role in wax or cutin deposition in the cell walls of expanding epidermal cells and certain secretory tissues. This Vitis sp. (Grape) protein is Non-specific lipid-transfer protein P4.